The primary structure comprises 451 residues: Putative gluconeogenesis factor (451 aa).

The protein belongs to the gluconeogenesis factor family.

The protein localises to the cytoplasm. Functionally, required for morphogenesis under gluconeogenic growth conditions. The chain is Putative gluconeogenesis factor from Clostridium acetobutylicum (strain ATCC 824 / DSM 792 / JCM 1419 / IAM 19013 / LMG 5710 / NBRC 13948 / NRRL B-527 / VKM B-1787 / 2291 / W).